The sequence spans 242 residues: Cytochrome c oxidase subunit 2 (242 aa).

Residues 7 to 33 are Mitochondrial intermembrane-facing; it reads DVPVPYGLYFQDSATPTFDGIIELHDI. Residues 34-55 traverse the membrane as a helical segment; that stretch reads VMFYIVVTIVLVSYLLFVIIKN. The Mitochondrial matrix segment spans residues 56-73; the sequence is FSNDHISYKYLTHGTTLE. The chain crosses the membrane as a helical span at residues 74–98; sequence IVWTIFPVVILLFIAFPSFILLYLC. Over 99–242 the chain is Mitochondrial intermembrane; the sequence is DEVIDPAMTI…DKFLSWLDEQ (144 aa). Residues H177, C212, E214, C216, H220, and M223 each contribute to the Cu cation site. Mg(2+) is bound at residue E214.

It belongs to the cytochrome c oxidase subunit 2 family. Component of the cytochrome c oxidase (complex IV, CIV), a multisubunit enzyme composed of a catalytic core of 3 subunits and several supernumerary subunits. The complex exists as a monomer or a dimer and forms supercomplexes (SCs) in the inner mitochondrial membrane with ubiquinol-cytochrome c oxidoreductase (cytochrome b-c1 complex, complex III, CIII). Cu cation is required as a cofactor. Post-translationally, the signal sequence of COX2 is processed by IMP1.

It is found in the mitochondrion inner membrane. The enzyme catalyses 4 Fe(II)-[cytochrome c] + O2 + 8 H(+)(in) = 4 Fe(III)-[cytochrome c] + 2 H2O + 4 H(+)(out). Component of the cytochrome c oxidase, the last enzyme in the mitochondrial electron transport chain which drives oxidative phosphorylation. The respiratory chain contains 3 multisubunit complexes succinate dehydrogenase (complex II, CII), ubiquinol-cytochrome c oxidoreductase (cytochrome b-c1 complex, complex III, CIII) and cytochrome c oxidase (complex IV, CIV), that cooperate to transfer electrons derived from NADH and succinate to molecular oxygen, creating an electrochemical gradient over the inner membrane that drives transmembrane transport and the ATP synthase. Cytochrome c oxidase is the component of the respiratory chain that catalyzes the reduction of oxygen to water. Electrons originating from reduced cytochrome c in the intermembrane space (IMS) are transferred via the dinuclear copper A center (CU(A)) of subunit 2 and heme A of subunit 1 to the active site in subunit 1, a binuclear center (BNC) formed by heme A3 and copper B (CU(B)). The BNC reduces molecular oxygen to 2 water molecules using 4 electrons from cytochrome c in the IMS and 4 protons from the mitochondrial matrix. The chain is Cytochrome c oxidase subunit 2 (COX2) from Yarrowia lipolytica (strain CLIB 122 / E 150) (Yeast).